Consider the following 489-residue polypeptide: Ketol-acid reductoisomerase (NADP(+)) (489 aa).

A KARI N-terminal Rossmann domain is found at 17–208 (LGVCEFMEQS…GGHKAGVLRS (192 aa)). Residues 45-48 (CGAQ), Arg-68, Arg-76, Ser-78, and 108-110 (DKQ) contribute to the NADP(+) site. His-132 is a catalytic residue. Gly-158 is a binding site for NADP(+). 2 consecutive KARI C-terminal knotted domains span residues 209–344 (SFVA…KTAP) and 345–485 (QEAP…MTAM). The Mg(2+) site is built by Asp-217, Glu-221, Glu-389, and Glu-393. A substrate-binding site is contributed by Ser-414.

This sequence belongs to the ketol-acid reductoisomerase family. Mg(2+) is required as a cofactor.

The catalysed reaction is (2R)-2,3-dihydroxy-3-methylbutanoate + NADP(+) = (2S)-2-acetolactate + NADPH + H(+). The enzyme catalyses (2R,3R)-2,3-dihydroxy-3-methylpentanoate + NADP(+) = (S)-2-ethyl-2-hydroxy-3-oxobutanoate + NADPH + H(+). It participates in amino-acid biosynthesis; L-isoleucine biosynthesis; L-isoleucine from 2-oxobutanoate: step 2/4. The protein operates within amino-acid biosynthesis; L-valine biosynthesis; L-valine from pyruvate: step 2/4. Its function is as follows. Involved in the biosynthesis of branched-chain amino acids (BCAA). Catalyzes an alkyl-migration followed by a ketol-acid reduction of (S)-2-acetolactate (S2AL) to yield (R)-2,3-dihydroxy-isovalerate. In the isomerase reaction, S2AL is rearranged via a Mg-dependent methyl migration to produce 3-hydroxy-3-methyl-2-ketobutyrate (HMKB). In the reductase reaction, this 2-ketoacid undergoes a metal-dependent reduction by NADPH to yield (R)-2,3-dihydroxy-isovalerate. In Flavobacterium johnsoniae (strain ATCC 17061 / DSM 2064 / JCM 8514 / BCRC 14874 / CCUG 350202 / NBRC 14942 / NCIMB 11054 / UW101) (Cytophaga johnsonae), this protein is Ketol-acid reductoisomerase (NADP(+)).